The primary structure comprises 765 residues: Putative maltooligosyl trehalose synthase (765 aa).

Belongs to the glycosyl hydrolase 13 family. In terms of assembly, monomer.

It carries out the reaction 4-[(1-&gt;4)-alpha-D-glucosyl](n-1)-D-glucose = 1-[(1-&gt;4)-alpha-D-glucosyl](n-1)-alpha-D-glucose. Functionally, catalyzes the conversion of maltooligosaccharide into the non-reducing saccharide, maltooligosyl trehalose (alpha-maltooligosyl alpha-D-glucoside) by intramolecular transglycosylation. This is Putative maltooligosyl trehalose synthase (treY) from Mycobacterium tuberculosis (strain CDC 1551 / Oshkosh).